A 288-amino-acid chain; its full sequence is MKLPIFIADAFTATAFRGNPAAVCLLERTLEEDAHQQIAREMNLSETAFIRKLQPTDSFTQSSRFGLRWFTPVSEVPLCGHATLASAAVLFHKIQNRNSTLTFVTMSGELKARRAEDGIVLDFPVYPTFPQDFHEVEDLIKAAIGDTLVQDIRYSTDTRKLLVRLSDSYDRSFLESLKVNTEPLPAIEKTGKVRGLILTVKGEPGGQTAPYDFYSRYFAPWVGIAEDPVTGSAHTVLSSYWSQQLRKKEMRAFQCSRRGGELDISLRPDGRVDIKGGAVIVLEGTLTA.

Glu-46 is an active-site residue.

Belongs to the PhzF family.

In Mus musculus (Mouse), this protein is Phenazine biosynthesis-like domain-containing protein 1 (Pbld1).